The chain runs to 267 residues: Kafirin PSKR2 (267 aa).

The signal sequence occupies residues 1 to 21; sequence MATKIFVLLALLALSVSTTTA.

It belongs to the zein family.

Major seed storage prolamin. The sequence is that of Kafirin PSKR2 from Sorghum bicolor (Sorghum).